A 313-amino-acid polypeptide reads, in one-letter code: Porphobilinogen deaminase (313 aa).

An S-(dipyrrolylmethanemethyl)cysteine modification is found at cysteine 242.

The protein belongs to the HMBS family. In terms of assembly, monomer. It depends on dipyrromethane as a cofactor.

It catalyses the reaction 4 porphobilinogen + H2O = hydroxymethylbilane + 4 NH4(+). It participates in porphyrin-containing compound metabolism; protoporphyrin-IX biosynthesis; coproporphyrinogen-III from 5-aminolevulinate: step 2/4. Functionally, tetrapolymerization of the monopyrrole PBG into the hydroxymethylbilane pre-uroporphyrinogen in several discrete steps. In Shigella flexneri, this protein is Porphobilinogen deaminase.